The sequence spans 260 residues: Snake venom serine protease pallabin (260 aa).

The signal sequence occupies residues 1 to 18 (MVLIRVLANLLILQLSYA). The propeptide occupies 19–24 (QKSSKL). A Peptidase S1 domain is found at 25-251 (VIGGDECNIN…HLDWIENIIA (227 aa)). Disulfide bonds link C31–C163, C50–C66, C98–C258, C142–C212, C174–C191, and C202–C227. Residue H65 is the Charge relay system of the active site. N103 is a glycosylation site (N-linked (GlcNAc...) asparagine). D110 serves as the catalytic Charge relay system. The active-site Charge relay system is S206.

It belongs to the peptidase S1 family. Snake venom subfamily. Monomer. As to expression, expressed by the venom gland.

It localises to the secreted. Its function is as follows. Snake venom serine protease that may act in the hemostasis system of the prey. This chain is Snake venom serine protease pallabin (JZTHR5), found in Gloydius halys (Chinese water mocassin).